The sequence spans 426 residues: Serine hydroxymethyltransferase (426 aa).

(6S)-5,6,7,8-tetrahydrofolate is bound by residues leucine 113 and 117-119 (GHL). An N6-(pyridoxal phosphate)lysine modification is found at lysine 222. 363–365 (SAF) serves as a coordination point for (6S)-5,6,7,8-tetrahydrofolate.

Belongs to the SHMT family. As to quaternary structure, homodimer. Requires pyridoxal 5'-phosphate as cofactor.

The protein localises to the cytoplasm. It carries out the reaction (6R)-5,10-methylene-5,6,7,8-tetrahydrofolate + glycine + H2O = (6S)-5,6,7,8-tetrahydrofolate + L-serine. Its pathway is one-carbon metabolism; tetrahydrofolate interconversion. It functions in the pathway amino-acid biosynthesis; glycine biosynthesis; glycine from L-serine: step 1/1. Catalyzes the reversible interconversion of serine and glycine with tetrahydrofolate (THF) serving as the one-carbon carrier. This reaction serves as the major source of one-carbon groups required for the biosynthesis of purines, thymidylate, methionine, and other important biomolecules. Also exhibits THF-independent aldolase activity toward beta-hydroxyamino acids, producing glycine and aldehydes, via a retro-aldol mechanism. The polypeptide is Serine hydroxymethyltransferase (Bacteroides fragilis (strain ATCC 25285 / DSM 2151 / CCUG 4856 / JCM 11019 / LMG 10263 / NCTC 9343 / Onslow / VPI 2553 / EN-2)).